A 234-amino-acid chain; its full sequence is Segregation and condensation protein A (234 aa).

Belongs to the ScpA family. In terms of assembly, component of a cohesin-like complex composed of ScpA, ScpB and the Smc homodimer, in which ScpA and ScpB bind to the head domain of Smc. The presence of the three proteins is required for the association of the complex with DNA.

It is found in the cytoplasm. Functionally, participates in chromosomal partition during cell division. May act via the formation of a condensin-like complex containing Smc and ScpB that pull DNA away from mid-cell into both cell halves. The polypeptide is Segregation and condensation protein A (Streptococcus pyogenes serotype M3 (strain ATCC BAA-595 / MGAS315)).